The following is a 677-amino-acid chain: Zinc finger and BTB domain-containing protein 5 (677 aa).

The BTB domain maps to 24–93; sequence CDCVIVVGNR…MYTSTLMLGE (70 aa). A compositionally biased stretch (polar residues) spans 158-181; the sequence is LNSSQNGEEQPAPMSSSMRSNLDQ. 2 disordered regions span residues 158–252 and 287–312; these read LNSS…MTDN and SMAS…SFQC. The residue at position 234 (S234) is a Phosphoserine. Residue K239 forms a Glycyl lysine isopeptide (Lys-Gly) (interchain with G-Cter in SUMO2) linkage. The segment covering 287–300 has biased composition (polar residues); it reads SMASRATQVETSFD. Residues K322 and K330 each participate in a glycyl lysine isopeptide (Lys-Gly) (interchain with G-Cter in SUMO2) cross-link. The interval 331 to 387 is disordered; the sequence is SEPLSSPEPQDEVSDVTSQAEGSESVEVEGVVVSAEKIDLSPESSDRSFSDPQSSTD. Positions 350–365 are enriched in low complexity; it reads AEGSESVEVEGVVVSA. The span at 366 to 379 shows a compositional bias: basic and acidic residues; the sequence is EKIDLSPESSDRSF. S371 carries the post-translational modification Phosphoserine. Glycyl lysine isopeptide (Lys-Gly) (interchain with G-Cter in SUMO2) cross-links involve residues K404 and K415. A disordered region spans residues 447 to 474; the sequence is LLSPEAGPAGGPSSAPGSHVENPFSEPA. The segment covering 449–464 has biased composition (low complexity); that stretch reads SPEAGPAGGPSSAPGS. K541 participates in a covalent cross-link: Glycyl lysine isopeptide (Lys-Gly) (interchain with G-Cter in SUMO2). The span at 552-576 shows a compositional bias: polar residues; the sequence is QIPENSTSSQLMMNGATSSFENGHP. The disordered stretch occupies residues 552–585; the sequence is QIPENSTSSQLMMNGATSSFENGHPSQPGPPQLT. Residues K594 and K597 each participate in a glycyl lysine isopeptide (Lys-Gly) (interchain with G-Cter in SUMO2) cross-link. The segment at 613-635 adopts a C2H2-type 1 zinc-finger fold; the sequence is YACKICCKTFLTLTDCKKHIRVH. Residues 641–664 form a C2H2-type 2; atypical zinc finger; sequence YACLKCGKRFSQSSHLYKHSKTTC. Residues K645 and K658 each participate in a glycyl lysine isopeptide (Lys-Gly) (interchain with G-Cter in SUMO2) cross-link.

It is found in the nucleus. May be involved in transcriptional regulation. The chain is Zinc finger and BTB domain-containing protein 5 (ZBTB5) from Homo sapiens (Human).